A 259-amino-acid polypeptide reads, in one-letter code: Phosphatidylglycerol--prolipoprotein diacylglyceryl transferase (259 aa).

Helical transmembrane passes span 12-32 (LAIH…VYLA), 41-61 (ISSD…IVGA), 80-100 (IIAI…GALV), and 109-129 (VLNP…AQAI). Arg-131 serves as a coordination point for a 1,2-diacyl-sn-glycero-3-phospho-(1'-sn-glycerol). Transmembrane regions (helical) follow at residues 167 to 187 (IPTF…IMMW), 194 to 214 (LLDG…RLVI), and 226 to 246 (GIRI…IFVI).

The protein belongs to the Lgt family.

The protein resides in the cell membrane. The catalysed reaction is L-cysteinyl-[prolipoprotein] + a 1,2-diacyl-sn-glycero-3-phospho-(1'-sn-glycerol) = an S-1,2-diacyl-sn-glyceryl-L-cysteinyl-[prolipoprotein] + sn-glycerol 1-phosphate + H(+). The protein operates within protein modification; lipoprotein biosynthesis (diacylglyceryl transfer). In terms of biological role, catalyzes the transfer of the diacylglyceryl group from phosphatidylglycerol to the sulfhydryl group of the N-terminal cysteine of a prolipoprotein, the first step in the formation of mature lipoproteins. This is Phosphatidylglycerol--prolipoprotein diacylglyceryl transferase from Streptococcus pyogenes serotype M3 (strain ATCC BAA-595 / MGAS315).